The following is a 118-amino-acid chain: MICOS complex subunit MIC13 (118 aa).

The Mitochondrial matrix portion of the chain corresponds to 1–7 (MVARVWS). Residues 8–26 (LMRFLIKGSVAGGAVYLVY) form a helical membrane-spanning segment. The Mitochondrial intermembrane segment spans residues 27 to 118 (DQELLGPSDK…GWEYVKARTK (92 aa)).

It belongs to the MICOS complex subunit Mic13 family. As to quaternary structure, component of the mitochondrial contact site and cristae organizing system (MICOS) complex, composed of at least MICOS10/MIC10, CHCHD3/MIC19, CHCHD6/MIC25, APOO/MIC26, MICOS13/MIC13, APOOL/MIC27 and IMMT/MIC60. The MICOS complex associates with mitochondrial outer membrane proteins SAMM50, MTX1 and MTX2 (together described as components of the mitochondrial outer membrane sorting assembly machinery (SAM) complex) and DNAJC11, mitochondrial inner membrane protein TMEM11 and with HSPA9. The MICOS and SAM complexes together with DNAJC11 are part of a large protein complex spanning both membranes termed the mitochondrial intermembrane space bridging (MIB) complex.

It localises to the mitochondrion inner membrane. Functionally, component of the MICOS complex, a large protein complex of the mitochondrial inner membrane that plays crucial roles in the maintenance of crista junctions, inner membrane architecture, and formation of contact sites to the outer membrane. Constituent of mature MICOS complex, it is required for the formation of cristae junction (CJ) and maintenance of cristae morphology. Required for the incorporation of MICOS10/MIC10 into the MICOS complex. This chain is MICOS complex subunit MIC13, found in Homo sapiens (Human).